A 637-amino-acid polypeptide reads, in one-letter code: Chaperone protein HtpG (637 aa).

Residues Met-1–Arg-345 are a; substrate-binding. The segment at Glu-346–Lys-562 is b. Residues Leu-563–Lys-637 are c.

This sequence belongs to the heat shock protein 90 family. In terms of assembly, homodimer.

The protein localises to the cytoplasm. Its function is as follows. Molecular chaperone. Has ATPase activity. The sequence is that of Chaperone protein HtpG from Shewanella sp. (strain W3-18-1).